The sequence spans 103 residues: Large ribosomal subunit protein bL21 (103 aa).

This sequence belongs to the bacterial ribosomal protein bL21 family. In terms of assembly, part of the 50S ribosomal subunit. Contacts protein L20.

Functionally, this protein binds to 23S rRNA in the presence of protein L20. This is Large ribosomal subunit protein bL21 from Albidiferax ferrireducens (strain ATCC BAA-621 / DSM 15236 / T118) (Rhodoferax ferrireducens).